We begin with the raw amino-acid sequence, 314 residues long: Probable 5-dehydro-4-deoxyglucarate dehydratase (314 aa).

The protein belongs to the DapA family.

It catalyses the reaction 5-dehydro-4-deoxy-D-glucarate + H(+) = 2,5-dioxopentanoate + CO2 + H2O. The protein operates within carbohydrate acid metabolism; D-glucarate degradation; 2,5-dioxopentanoate from D-glucarate: step 2/2. The protein is Probable 5-dehydro-4-deoxyglucarate dehydratase of Bradyrhizobium sp. (strain ORS 278).